We begin with the raw amino-acid sequence, 501 residues long: MAYSSRSCDQCSHERRSGFMKWLCAFLKGTKDGEANRRRPRVTAGEETTLWEEPVRPKKEEPPRHNNEEMDHALALALADDAKNTKERNHDKGENDEELARAIQDSLNMNPYQPYNPCAPSQTQARSRGYRVCGGCKHEIGHGHYLSCLGMYWHPQCFRCSSCRHPIREMEFTLLGTDPYHKLCYKELHHPKCDVCLQFIPTNRTGLIEYRAHPFWGQKYCPLHEHDRTPRCCSCEKMEPRNTKYMSLGDGRSLCMECLDSAIMDTGECQPLYHSIRDYYEGMNMKLDQQIPMLLVERQALNEAMEGESKGPHHMPETRGLCLSEEQTVTSILRRPRIGANRLLDMKTQPQKLTRRCEVTAILVLFGLPRLLTGSILAHELMHGWLRLKGYRNLKAEIEEGICQVMSYLWLESEILPSTSRYGQASTSYASSSSSSCRPPPSKKGGISHTEKKLGEFFLHQIANDTSSAYGDGFRAAYAAVNKYGLRQSLNHIRLTGGFPV.

The tract at residues Gly-33–Asn-67 is disordered. Basic and acidic residues predominate over residues Glu-53–Asn-67. UIM domains are found at residues His-65–Asn-84 and Glu-94–Gln-113. Positions Arg-131–Pro-191 constitute an LIM zinc-binding domain. Positions Tyr-429–Ser-448 are disordered.

Interacts (via N-terminus) with GW6A (via C-terminus).

Ubiquitin receptor that functions as a positive regulator of grain size and weight. Functions in the same genetic pathway as GW6A to regulate grain size. Modulates grain size in a similar manner to GW6A, by altering cell proliferation in spikelet hulls. Interacts with and enhances the ubiquitination of GW6A. This stabilizes GW6A, delays protein degradation by the 26S proteasome and enhances GW6A histone acetyltransferase activity. This chain is LIM domain-containing protein HDR3, found in Oryza sativa subsp. japonica (Rice).